The chain runs to 337 residues: Visual pigment-like receptor peropsin (337 aa).

Residues 1–26 (MLSEASDFNSSGSRSEGSVFSRTEHS) are Extracellular-facing. N-linked (GlcNAc...) asparagine glycosylation occurs at Asn9. Residues 27–49 (VIAAYLIVAGITSILSNVVVLGI) form a helical membrane-spanning segment. Residues 50–61 (FIKYKELRTPTN) are Cytoplasmic-facing. Residues 62 to 87 (AVIINLAFTDIGVSSIGYPMSAASDL) traverse the membrane as a helical segment. The Extracellular segment spans residues 88 to 101 (HGSWKFGHAGCQIY). A disulfide bridge links Cys98 with Cys175. Residues 102–121 (AGLNIFFGMVSIGLLTVVAM) traverse the membrane as a helical segment. Residues 122–140 (DRYLTISCPDVGRRMTTNT) are Cytoplasmic-facing. Residues 141–164 (YLSMILGAWINGLFWALMPIIGWA) form a helical membrane-spanning segment. Over 165 to 188 (SYAPDPTGATCTINWRNNDTSFVS) the chain is Extracellular. N-linked (GlcNAc...) asparagine glycosylation occurs at Asn182. A helical transmembrane segment spans residues 189-212 (YTMMVIVVNFIVPLTVMFYCYYHV). At 213 to 240 (SRSLRLYAASDCTAHLHRDWADQADVTK) the chain is on the cytoplasmic side. A helical transmembrane segment spans residues 241–264 (MSVIMILMFLLAWSPYSIVCLWAC). Over 265–272 (FGNPKKIP) the chain is Extracellular. A helical membrane pass occupies residues 273–297 (PSMAIIAPLFAKSSTFYNPCIYVAA). An N6-(retinylidene)lysine modification is found at Lys284. Over 298–337 (HKKFRKAMLAMFKCQPHLAVPEPSTLPMDMPQSSLAPVRI) the chain is Cytoplasmic.

The protein belongs to the G-protein coupled receptor 1 family. Opsin subfamily. In terms of tissue distribution, found only in the eye, where it is localized to the retinal pigment epithelium (RPE). In the RPE, it is localized to the microvilli that surround the photoreceptor outer segments.

It is found in the membrane. Functionally, may play a role in rpe physiology either by detecting light directly or by monitoring the concentration of retinoids or other photoreceptor-derived compounds. The sequence is that of Visual pigment-like receptor peropsin (Rrh) from Mus musculus (Mouse).